Reading from the N-terminus, the 368-residue chain is MLYYLLSYVREIYDPPGLGVINYITFRAGAAAVTALIIILVFGPKIIRFLRDKVIEPIKEEAPEEHRKKVNIPTMGGLMIILAIEVSGLLWAKIAEPFVWMVLLAIIWMGAVGFVDDYRKVVLKIKGGLSGRYKIVGQVALGLIIGGYTFFDPTLSVLLSKTTVPFIKEITVDYGIWYIPLAIFIVTAVSNAVNLTDGLDGLAAGSTAISVFSLAGFAYLTGNVKFAEYLNITYIPGAGEVTILSMAIVAACIGFLWFNSNPAEVFMGDTGSLALGSAVAVIALLIKKELLLPLIAGIFFIETLSVIIQRGYFKYTKRRDGEGKRIFRMAPLHHHFQKKGWAEQKIVIRFWIIEVLLVLTSLLTLKLR.

9 helical membrane passes run 23 to 43 (YITFRAGAAAVTALIIILVFG), 72 to 92 (IPTMGGLMIILAIEVSGLLWA), 94 to 114 (IAEPFVWMVLLAIIWMGAVGF), 139 to 159 (VALGLIIGGYTFFDPTLSVLL), 170 to 190 (ITVDYGIWYIPLAIFIVTAVS), 201 to 221 (GLAAGSTAISVFSLAGFAYLT), 238 to 258 (AGEVTILSMAIVAACIGFLWF), 265 to 286 (VFMGDTGSLALGSAVAVIALLI), and 345 to 365 (KIVIRFWIIEVLLVLTSLLTL).

It belongs to the glycosyltransferase 4 family. MraY subfamily. Mg(2+) is required as a cofactor.

It is found in the cell inner membrane. It carries out the reaction UDP-N-acetyl-alpha-D-muramoyl-L-alanyl-gamma-D-glutamyl-meso-2,6-diaminopimeloyl-D-alanyl-D-alanine + di-trans,octa-cis-undecaprenyl phosphate = di-trans,octa-cis-undecaprenyl diphospho-N-acetyl-alpha-D-muramoyl-L-alanyl-D-glutamyl-meso-2,6-diaminopimeloyl-D-alanyl-D-alanine + UMP. It functions in the pathway cell wall biogenesis; peptidoglycan biosynthesis. Catalyzes the initial step of the lipid cycle reactions in the biosynthesis of the cell wall peptidoglycan: transfers peptidoglycan precursor phospho-MurNAc-pentapeptide from UDP-MurNAc-pentapeptide onto the lipid carrier undecaprenyl phosphate, yielding undecaprenyl-pyrophosphoryl-MurNAc-pentapeptide, known as lipid I. This is Phospho-N-acetylmuramoyl-pentapeptide-transferase from Chloroherpeton thalassium (strain ATCC 35110 / GB-78).